A 1482-amino-acid polypeptide reads, in one-letter code: Chromosome partition protein MukB (1482 aa).

ATP is bound at residue Gly34–Ser41. Positions Ala333–Gln665 form a coiled coil. The tract at residues Pro666–Arg783 is flexible hinge. Coiled coils occupy residues Glu784–Gly1116 and Val1209–Gln1260.

The protein belongs to the SMC family. MukB subfamily. In terms of assembly, homodimerization via its hinge domain. Binds to DNA via its C-terminal region. Interacts, and probably forms a ternary complex, with MukE and MukF via its C-terminal region. The complex formation is stimulated by calcium or magnesium. Interacts with tubulin-related protein FtsZ.

It is found in the cytoplasm. It localises to the nucleoid. In terms of biological role, plays a central role in chromosome condensation, segregation and cell cycle progression. Functions as a homodimer, which is essential for chromosome partition. Involved in negative DNA supercoiling in vivo, and by this means organize and compact chromosomes. May achieve or facilitate chromosome segregation by condensation DNA from both sides of a centrally located replisome during cell division. This Photorhabdus laumondii subsp. laumondii (strain DSM 15139 / CIP 105565 / TT01) (Photorhabdus luminescens subsp. laumondii) protein is Chromosome partition protein MukB.